The chain runs to 95 residues: Aspartyl/glutamyl-tRNA(Asn/Gln) amidotransferase subunit C (95 aa).

It belongs to the GatC family. As to quaternary structure, heterotrimer of A, B and C subunits.

It catalyses the reaction L-glutamyl-tRNA(Gln) + L-glutamine + ATP + H2O = L-glutaminyl-tRNA(Gln) + L-glutamate + ADP + phosphate + H(+). It carries out the reaction L-aspartyl-tRNA(Asn) + L-glutamine + ATP + H2O = L-asparaginyl-tRNA(Asn) + L-glutamate + ADP + phosphate + 2 H(+). Its function is as follows. Allows the formation of correctly charged Asn-tRNA(Asn) or Gln-tRNA(Gln) through the transamidation of misacylated Asp-tRNA(Asn) or Glu-tRNA(Gln) in organisms which lack either or both of asparaginyl-tRNA or glutaminyl-tRNA synthetases. The reaction takes place in the presence of glutamine and ATP through an activated phospho-Asp-tRNA(Asn) or phospho-Glu-tRNA(Gln). The protein is Aspartyl/glutamyl-tRNA(Asn/Gln) amidotransferase subunit C of Campylobacter lari (strain RM2100 / D67 / ATCC BAA-1060).